We begin with the raw amino-acid sequence, 78 residues long: MTLFSSITSISKTNTSSKSSVNSLSGSSLSMGSNSVACGGCDKPAAGAAILANIDIKAKVDLSLSAAAAASAKCGACH.

The segment at 1-32 (MTLFSSITSISKTNTSSKSSVNSLSGSSLSMG) is disordered.

This sequence belongs to the hssA/B family.

The protein is HssA/B-like protein 30 (hssl30) of Dictyostelium discoideum (Social amoeba).